The chain runs to 221 residues: MLAVYQTRFLEAALAADALKFGEFTLKSGRHSPYFFNAAAFCNGKLLSVMTEAYAAVIAELHETCAIDVLFGPAYKGIPLVAGIAQALFHRYDINLAWAFNRKETKTHGEGGNIVGASVAGKKVLLVDDVLTAGTAVRQSLALLAQEQAMPVGLVIALDRQEKVGDSNLSALKQFSVENQLQTRAIITLDDLMTFVKESGKPAVLEKMQAYRKIYGISEAD.

Residue Lys27 coordinates 5-phospho-alpha-D-ribose 1-diphosphate. 35–36 is an orotate binding site; sequence FF. 5-phospho-alpha-D-ribose 1-diphosphate contacts are provided by residues 75-76, Arg102, Lys103, Lys106, His108, and 128-136; these read YK and DDVLTAGTA. Orotate is bound by residues Thr132 and Arg160.

It belongs to the purine/pyrimidine phosphoribosyltransferase family. PyrE subfamily. As to quaternary structure, homodimer. The cofactor is Mg(2+).

The catalysed reaction is orotidine 5'-phosphate + diphosphate = orotate + 5-phospho-alpha-D-ribose 1-diphosphate. It functions in the pathway pyrimidine metabolism; UMP biosynthesis via de novo pathway; UMP from orotate: step 1/2. Catalyzes the transfer of a ribosyl phosphate group from 5-phosphoribose 1-diphosphate to orotate, leading to the formation of orotidine monophosphate (OMP). The chain is Orotate phosphoribosyltransferase from Dichelobacter nodosus (strain VCS1703A).